Consider the following 93-residue polypeptide: Integration host factor subunit beta (93 aa).

Residues 59-93 (RVGRNPKTGQSVSLDGKFVPHFKPGKELRDRVNDD) are disordered. The span at 82 to 93 (PGKELRDRVNDD) shows a compositional bias: basic and acidic residues.

This sequence belongs to the bacterial histone-like protein family. As to quaternary structure, heterodimer of an alpha and a beta chain.

Its function is as follows. This protein is one of the two subunits of integration host factor, a specific DNA-binding protein that functions in genetic recombination as well as in transcriptional and translational control. The protein is Integration host factor subunit beta of Stutzerimonas stutzeri (strain A1501) (Pseudomonas stutzeri).